The following is a 303-amino-acid chain: MKILRTPDSRFANLPDYNFDPHYLMVDDSEDSELRVHYLDEGPRDADPVLLLHGEPSWCYLYRKMIPILTAAGHRVIAPDLPGFGRSDKPASRTDYTYQRHVNWMQSVLDQLDLNNITLFCQDWGGLIGLRLVAENPDRFARVAAGNTMLPTGDHDLGEGFRKWQQFSQEIPQFHVGGTIKSGTVTKLSQAVIDAYNAPFPDESYKEGARQFPLLVPSTPDDPASENNRAAWIELSKWTKPFITLFSDSDPVTAGGDRIMQKIIPGTKGQAHTTIANGGHFLQEDQGEKVAKLLVQFIHDNPR.

Residues 48-192 (PVLLLHGEPS…GTVTKLSQAV (145 aa)) enclose the AB hydrolase-1 domain. Residue Asp123 is the Nucleophile of the active site. The active-site Proton donor is the Asp250. The Proton acceptor role is filled by His280.

Belongs to the haloalkane dehalogenase family. Type 1 subfamily. Monomer.

It catalyses the reaction 1-haloalkane + H2O = a halide anion + a primary alcohol + H(+). Its function is as follows. Catalyzes hydrolytic cleavage of carbon-halogen bonds in halogenated aliphatic compounds, leading to the formation of the corresponding primary alcohols, halide ions and protons. This is Haloalkane dehalogenase from Psychrobacter cryohalolentis (strain ATCC BAA-1226 / DSM 17306 / VKM B-2378 / K5).